The chain runs to 907 residues: Sensor protein GacS (907 aa).

3 helical membrane-spanning segments follow: residues 9-25 (ASLM…WMQL), 84-101 (VLAH…IGSG), and 159-178 (LFAS…TLAV). The HAMP domain occupies 182–234 (RTINGPMSQIKQAVSQLKDGNLETRLPPLGSRELDELASGINRMAATLQNAQE). A Histidine kinase domain is found at 281-502 (NMSHEIRTPL…EFWISLKLPK (222 aa)). Histidine 284 carries the post-translational modification Phosphohistidine; by autocatalysis. The 120-residue stretch at 658-777 (RVLCVDDNPA…QLAQVVLKWT (120 aa)) folds into the Response regulatory domain. Aspartate 707 is subject to 4-aspartylphosphate. Positions 814-907 (KADLAADMLA…RLEAEARVMA (94 aa)) constitute an HPt domain. Position 853 is a phosphohistidine (histidine 853).

Activation requires a sequential transfer of a phosphate group from a His in the primary transmitter domain, to an Asp in the receiver domain and to a His in the secondary transmitter domain.

The protein resides in the cell inner membrane. The enzyme catalyses ATP + protein L-histidine = ADP + protein N-phospho-L-histidine.. In terms of biological role, forms part of a two-component regulatory system GacA/GacS(LemA). May be involved in lesion formation, swarming and in the production of extracellular protease, syringomycin and N-acyl-L-homoserine lactone (acyl-HSL). Required for pathogenicity on bean. This is Sensor protein GacS (gacS) from Pseudomonas syringae pv. syringae.